The following is a 2312-amino-acid chain: Protein Ycf2 (2312 aa).

ATP is bound at residue 1630 to 1637; the sequence is GSIGTGRS.

The protein belongs to the Ycf2 family.

It is found in the plastid. The protein resides in the chloroplast stroma. Its function is as follows. Probable ATPase of unknown function. Its presence in a non-photosynthetic plant (Epifagus virginiana) and experiments in tobacco indicate that it has an essential function which is probably not related to photosynthesis. The polypeptide is Protein Ycf2 (Manihot esculenta (Cassava)).